The sequence spans 929 residues: Protocadherin gamma-B7 (929 aa).

Residues 1-30 (MGGSCAQRRRAGPRQVLFPLLLPLFYPTLC) form the signal peptide. Cadherin domains follow at residues 31 to 133 (EPIR…APQF), 134 to 242 (RKDE…PPVF), 243 to 347 (SQDV…SPEI), 348 to 452 (IITS…APVF), 453 to 562 (GQSA…APRV), and 570 to 675 (DGSA…LPDF). Over 31–691 (EPIRYSIPEE…SDSQAEMQFY (661 aa)) the chain is Extracellular. Residues Asn-419 and Asn-545 are each glycosylated (N-linked (GlcNAc...) asparagine). A helical transmembrane segment spans residues 692 to 712 (LVVALALISVLFLLAVILAIA). The Cytoplasmic portion of the chain corresponds to 713–929 (LRLRQSFSPT…KKKSGKKEKK (217 aa)). Disordered regions lie at residues 806 to 838 (QAPP…WPNN) and 899 to 929 (ATLT…KEKK). The segment covering 807–838 (APPNTDWRFSQAQRPGTSGSQNGDDTGTWPNN) has biased composition (polar residues). The segment covering 919-929 (NKKKSGKKEKK) has biased composition (basic residues).

It localises to the cell membrane. Functionally, potential calcium-dependent cell-adhesion protein. May be involved in the establishment and maintenance of specific neuronal connections in the brain. This Homo sapiens (Human) protein is Protocadherin gamma-B7 (PCDHGB7).